Consider the following 145-residue polypeptide: Neutral phospholipase A2 homolog taipoxin beta chain 1 (145 aa).

The signal sequence occupies residues Met1–Leu27. 7 disulfide bridges follow: Cys38-Cys98, Cys54-Cys144, Cys56-Cys72, Cys71-Cys125, Cys78-Cys118, Cys87-Cys111, and Cys105-Cys116.

This sequence belongs to the phospholipase A2 family. Group I subfamily. D49 sub-subfamily. As to quaternary structure, heterotrimer of alpha, beta, and gamma chains; non-covalently linked. Expressed by the venom gland.

The protein resides in the secreted. Its function is as follows. Heterotrimer: Snake venom phospholipase A2 (PLA2) heterotrimer that acts as a potent presynaptic neurotoxin by blocking synaptic transmission and synaptic vesicle recycling. May act by binding in a calcium-dependent fashion to neurotonal pentraxin-1 (NPTX1) and neurotonal pentraxin-2 (NPTX2), but not to neuronal pentraxin receptor (NPTXR). Also binds to taipoxin-associated calcium binding protein 49 (RCN2), a protein localized in the lumen of endoplasmic reticulum. Monomer (beta chain): Snake venom phospholipase A2 homolog that is neither toxic nor enzymatically active. Does not bind calcium. This Oxyuranus scutellatus scutellatus (Australian taipan) protein is Neutral phospholipase A2 homolog taipoxin beta chain 1.